Reading from the N-terminus, the 551-residue chain is Glucans biosynthesis protein D (551 aa).

A signal peptide (tat-type signal) is located at residues 1–32 (MDRRRFIKGSMAMAAVCGTSGIASLFSQAAFA).

This sequence belongs to the OpgD/OpgG family. Post-translationally, predicted to be exported by the Tat system. The position of the signal peptide cleavage has not been experimentally proven.

It localises to the periplasm. It functions in the pathway glycan metabolism; osmoregulated periplasmic glucan (OPG) biosynthesis. Probably involved in the control of the structural glucose backbone of osmoregulated periplasmic glucans (OPGs). This is Glucans biosynthesis protein D from Escherichia coli O1:K1 / APEC.